The sequence spans 154 residues: Endoribonuclease YbeY (154 aa).

Positions 113, 117, and 123 each coordinate Zn(2+).

Belongs to the endoribonuclease YbeY family. It depends on Zn(2+) as a cofactor.

The protein resides in the cytoplasm. Functionally, single strand-specific metallo-endoribonuclease involved in late-stage 70S ribosome quality control and in maturation of the 3' terminus of the 16S rRNA. This is Endoribonuclease YbeY from Vibrio vulnificus (strain YJ016).